A 347-amino-acid polypeptide reads, in one-letter code: Endo-1,4-beta-xylanase 3 (347 aa).

Positions 1 to 16 (MKANVILCLLAPLVAA) are cleaved as a signal peptide. Residues 17–45 (LPTETIHLDPELAALRANLTERTADLWDR) constitute a propeptide that is removed on maturation. At Gln-46 the chain carries Pyrrolidone carboxylic acid. Positions 46 to 345 (QASQSIDQLI…KPAYNSIVGI (300 aa)) constitute a GH10 domain. Glu-176 functions as the Proton donor in the catalytic mechanism. Glu-282 acts as the Nucleophile in catalysis. Cys-300 and Cys-306 are disulfide-bonded.

This sequence belongs to the glycosyl hydrolase 10 (cellulase F) family. As to quaternary structure, monomer. Post-translationally, not glycosylated.

Its subcellular location is the secreted. It carries out the reaction Endohydrolysis of (1-&gt;4)-beta-D-xylosidic linkages in xylans.. It participates in glycan degradation; xylan degradation. Glycoside hydrolase involved in the hydrolysis of xylan, a major plant cell wall hemicellulose made up of 1,4-beta-linked D-xylopyranose residues. Catalyzes the endohydrolysis of the main-chain 1,4-beta-glycosidic bonds connecting the xylose subunits yielding various xylooligosaccharides and xylose. Produces xylobiose and xylotriose as the main degradation products. In Hypocrea jecorina (strain QM6a) (Trichoderma reesei), this protein is Endo-1,4-beta-xylanase 3 (xyn3).